We begin with the raw amino-acid sequence, 253 residues long: Phosphoadenosine 5'-phosphosulfate reductase (253 aa).

Catalysis depends on C239, which acts as the Nucleophile; cysteine thiosulfonate intermediate.

Belongs to the PAPS reductase family. CysH subfamily.

It localises to the cytoplasm. It carries out the reaction [thioredoxin]-disulfide + sulfite + adenosine 3',5'-bisphosphate + 2 H(+) = [thioredoxin]-dithiol + 3'-phosphoadenylyl sulfate. The protein operates within sulfur metabolism; hydrogen sulfide biosynthesis; sulfite from sulfate: step 3/3. Catalyzes the formation of sulfite from phosphoadenosine 5'-phosphosulfate (PAPS) using thioredoxin as an electron donor. This chain is Phosphoadenosine 5'-phosphosulfate reductase, found in Aliivibrio salmonicida (strain LFI1238) (Vibrio salmonicida (strain LFI1238)).